Consider the following 901-residue polypeptide: Protein translocase subunit SecA (901 aa).

Residues Gln85, 103–107, and Asp510 each bind ATP; that span reads GEGKT. Residues 836-845 show a composition bias toward basic and acidic residues; that stretch reads EEAERARQEM. A disordered region spans residues 836-901; the sequence is EEAERARQEM…HCHGSRVARQ (66 aa). Over residues 849–866 the composition is skewed to polar residues; the sequence is INQNNLPVDENSQTTQNS. Zn(2+) is bound by residues Cys882, Cys884, Cys893, and His894. Residues 888–901 are compositionally biased toward basic residues; that stretch reads KKYKHCHGSRVARQ.

This sequence belongs to the SecA family. Monomer and homodimer. Part of the essential Sec protein translocation apparatus which comprises SecA, SecYEG and auxiliary proteins SecDF-YajC and YidC. Zn(2+) serves as cofactor.

The protein localises to the cell inner membrane. It localises to the cytoplasm. It catalyses the reaction ATP + H2O + cellular proteinSide 1 = ADP + phosphate + cellular proteinSide 2.. Part of the Sec protein translocase complex. Interacts with the SecYEG preprotein conducting channel. Has a central role in coupling the hydrolysis of ATP to the transfer of proteins into and across the cell membrane, serving both as a receptor for the preprotein-SecB complex and as an ATP-driven molecular motor driving the stepwise translocation of polypeptide chains across the membrane. The protein is Protein translocase subunit SecA of Haemophilus influenzae (strain PittEE).